A 321-amino-acid chain; its full sequence is Protein ATP1B4 (321 aa).

Residues 1-41 are disordered; sequence MEPGMEMNTASEGGTRRGPENKHEEKVQDPNRGEAETKAEM. At 1–72 the chain is on the cytoplasmic side; the sequence is MEPGMEMNTA…RTCMGRTAKS (72 aa). Residues 14–41 are compositionally biased toward basic and acidic residues; it reads GTRRGPENKHEEKVQDPNRGEAETKAEM. Residues 73 to 93 traverse the membrane as a helical segment; that stretch reads WGLILLFYFIFYTCLAGMFAF. Residues 94–321 lie on the Extracellular side of the membrane; the sequence is CMYVMLLTLS…RIIFTLSIGK (228 aa). N-linked (GlcNAc...) asparagine glycosylation is found at Asn132, Asn176, and Asn193. Cys165 and Cys184 are joined by a disulfide. 2 disulfide bridges follow: Cys194-Cys210 and Cys233-Cys293. 3 N-linked (GlcNAc...) asparagine glycosylation sites follow: Asn239, Asn252, and Asn270.

It belongs to the X(+)/potassium ATPases subunit beta family. In terms of assembly, composed of two subunits: alpha (catalytic) and beta (accessory). In terms of processing, glycosylated. Expressed in skeletal muscle, intestine, heart, brain, retina, inner ear and skin.

The protein resides in the membrane. This is the non-catalytic component of the active enzyme, which catalyzes the hydrolysis of ATP coupled with the exchange of Na(+) and K(+) ions across the plasma membrane. In Gallus gallus (Chicken), this protein is Protein ATP1B4 (ATP1B4).